The following is a 384-amino-acid chain: Cell division protein FtsZ (384 aa).

Residues 20-24 (GGGGN), 107-109 (GTG), E138, R142, and N186 contribute to the GTP site.

The protein belongs to the FtsZ family. In terms of assembly, homodimer. Polymerizes to form a dynamic ring structure in a strictly GTP-dependent manner. Interacts directly with several other division proteins.

The protein localises to the cytoplasm. Functionally, essential cell division protein that forms a contractile ring structure (Z ring) at the future cell division site. The regulation of the ring assembly controls the timing and the location of cell division. One of the functions of the FtsZ ring is to recruit other cell division proteins to the septum to produce a new cell wall between the dividing cells. Binds GTP and shows GTPase activity. This is Cell division protein FtsZ from Wigglesworthia glossinidia brevipalpis.